Here is a 113-residue protein sequence, read N- to C-terminus: Photosystem II reaction center Psb28 protein (113 aa).

It belongs to the Psb28 family. Part of the photosystem II complex.

Its subcellular location is the cellular thylakoid membrane. In Nostoc punctiforme (strain ATCC 29133 / PCC 73102), this protein is Photosystem II reaction center Psb28 protein.